Here is a 399-residue protein sequence, read N- to C-terminus: Chorismate synthase (399 aa).

The tract at residues 41-72 (IQKDLDRRKPGQSMITTSRGEPDKVTINSGIQ) is disordered. Arginine 48 serves as a coordination point for NADP(+). FMN is bound by residues 125–127 (RSS), glycine 288, 303–307 (HAPVS), and arginine 330. Basic and acidic residues-rich tracts occupy residues 363–377 (PDRL…DTDY) and 389–399 (ADTHAKTIDDD). Positions 363-399 (PDRLDGRPGEYDTDYHPSSPQNDPEDADTHAKTIDDD) are disordered.

It belongs to the chorismate synthase family. FMNH2 serves as cofactor.

It catalyses the reaction 5-O-(1-carboxyvinyl)-3-phosphoshikimate = chorismate + phosphate. The protein operates within metabolic intermediate biosynthesis; chorismate biosynthesis; chorismate from D-erythrose 4-phosphate and phosphoenolpyruvate: step 7/7. In terms of biological role, catalyzes the anti-1,4-elimination of the C-3 phosphate and the C-6 proR hydrogen from 5-enolpyruvylshikimate-3-phosphate (EPSP) to yield chorismate, which is the branch point compound that serves as the starting substrate for the three terminal pathways of aromatic amino acid biosynthesis. This reaction introduces a second double bond into the aromatic ring system. This Haloarcula marismortui (strain ATCC 43049 / DSM 3752 / JCM 8966 / VKM B-1809) (Halobacterium marismortui) protein is Chorismate synthase.